Here is a 272-residue protein sequence, read N- to C-terminus: MSRIASTFSALKSQGRKALIPYVTAGFPFADITPELMHSMVAGGADVIELGVPFSDPSADGPVIQKAGEKALALGIGLAQVLEMVRVFRQKDGTTPVVLMGYANPVERYDIKHGGSATESAFIRDAAQAGVDGVLIVDYPPEECVEFAARLRAHNMDLIFLLAPTSTSARMAQVAEVASGYVYYVSLKGVTGAGTLDVDAVEAMLPRIRQHVKVPVGVGFGIRDAATAKAIGKVADAVVIGSKIIQLIENQPRDKVATVARDFLKEIRAALD.

Residues E49 and D60 each act as proton acceptor in the active site.

It belongs to the TrpA family. Tetramer of two alpha and two beta chains.

The catalysed reaction is (1S,2R)-1-C-(indol-3-yl)glycerol 3-phosphate + L-serine = D-glyceraldehyde 3-phosphate + L-tryptophan + H2O. It functions in the pathway amino-acid biosynthesis; L-tryptophan biosynthesis; L-tryptophan from chorismate: step 5/5. The alpha subunit is responsible for the aldol cleavage of indoleglycerol phosphate to indole and glyceraldehyde 3-phosphate. This chain is Tryptophan synthase alpha chain, found in Polaromonas sp. (strain JS666 / ATCC BAA-500).